The chain runs to 213 residues: Ribosomal RNA small subunit methyltransferase G (213 aa).

S-adenosyl-L-methionine-binding positions include Gly75, Phe80, 128-129 (IE), and Arg144.

It belongs to the methyltransferase superfamily. RNA methyltransferase RsmG family.

Its subcellular location is the cytoplasm. It carries out the reaction guanosine(527) in 16S rRNA + S-adenosyl-L-methionine = N(7)-methylguanosine(527) in 16S rRNA + S-adenosyl-L-homocysteine. Specifically methylates the N7 position of guanine in position 527 of 16S rRNA. The polypeptide is Ribosomal RNA small subunit methyltransferase G (Brucella suis biovar 1 (strain 1330)).